Reading from the N-terminus, the 125-residue chain is Flagellar protein FliT (125 aa).

A required for homodimerization region spans residues 1 to 50 (MDNKMDLLSAYQRILSLSEQMLNLAKNEKWDELVDMEITYLKAVEVISHS). Positions 60–98 (LQQKMTNILQIILDNENEIKKLLQKRLDELSKLIKQASQ) are fliD binding.

The protein belongs to the FliT family. As to quaternary structure, homodimer. Interacts with FliD and FlhC.

Its subcellular location is the cytoplasm. It is found in the cytosol. In terms of biological role, dual-function protein that regulates the transcription of class 2 flagellar operons and that also acts as an export chaperone for the filament-capping protein FliD. As a transcriptional regulator, acts as an anti-FlhDC factor; it directly binds FlhC, thus inhibiting the binding of the FlhC/FlhD complex to class 2 promoters, resulting in decreased expression of class 2 flagellar operons. As a chaperone, effects FliD transition to the membrane by preventing its premature polymerization, and by directing it to the export apparatus. The polypeptide is Flagellar protein FliT (Photorhabdus laumondii subsp. laumondii (strain DSM 15139 / CIP 105565 / TT01) (Photorhabdus luminescens subsp. laumondii)).